The chain runs to 369 residues: Probable trehalose-phosphate phosphatase I (369 aa).

This sequence belongs to the trehalose phosphatase family. Requires a divalent metal cation as cofactor.

It catalyses the reaction alpha,alpha-trehalose 6-phosphate + H2O = alpha,alpha-trehalose + phosphate. It participates in glycan biosynthesis; trehalose biosynthesis. Removes the phosphate from trehalose 6-phosphate to produce free trehalose. Trehalose accumulation in plant may improve abiotic stress tolerance. The polypeptide is Probable trehalose-phosphate phosphatase I (TPPI) (Arabidopsis thaliana (Mouse-ear cress)).